A 270-amino-acid chain; its full sequence is Beta carbonic anhydrase 1 (270 aa).

C39, D41, H105, and C108 together coordinate Zn(2+).

Belongs to the beta-class carbonic anhydrase family. Zn(2+) serves as cofactor.

It catalyses the reaction hydrogencarbonate + H(+) = CO2 + H2O. Functionally, reversible hydration of carbon dioxide. In Caenorhabditis briggsae, this protein is Beta carbonic anhydrase 1.